A 263-amino-acid polypeptide reads, in one-letter code: Probable 6-oxopurine nucleoside phosphorylase (263 aa).

Phosphate is bound by residues Thr9, 49–50, and 82–83; these read RH and TA. Substrate is bound at residue Met181. Thr182 is a binding site for phosphate. 205–207 contributes to the substrate binding site; it reads NYA.

Belongs to the PNP/MTAP phosphorylase family. MTAP subfamily. In terms of assembly, homohexamer. Dimer of a homotrimer.

The enzyme catalyses a purine D-ribonucleoside + phosphate = a purine nucleobase + alpha-D-ribose 1-phosphate. Its pathway is purine metabolism; purine nucleoside salvage. In terms of biological role, purine nucleoside phosphorylase which is highly specific for 6-oxopurine nucleosides. Cleaves guanosine or inosine to respective bases and sugar-1-phosphate molecules. Involved in purine salvage. The chain is Probable 6-oxopurine nucleoside phosphorylase from Dictyoglomus turgidum (strain DSM 6724 / Z-1310).